Consider the following 232-residue polypeptide: Replicative helicase loading/DNA remodeling protein DnaD (232 aa).

The N-terminal domain stretch occupies residues 1–98 (MKKQQFIDMQ…QNGIKFEKYS (98 aa)). The DDBH1 stretch occupies residues 1–116 (MKKQQFIDMQ…YEYIQLAQNQ (116 aa)). The C-terminal domain stretch occupies residues 99–205 (LQPLWGKLYE…VEQAKIHSQK (107 aa)). Residues 131 to 200 (TIFEEEFARP…NGLKTVEQAK (70 aa)) form a DDBH2 region. Positions 206 to 232 (FRRVQAKQNEPQKEYKRQVPFYNWLEQ) are C-terminal tail.

Belongs to the DnaB/DnaD family. As to quaternary structure, the DNA replisome assembles sequentially on oriC in this order; DnaA, DnaD, DnaB, DnaI-DnaC helicase. Homodimer. Homotetramer. Oligomerization in vitro is concentration dependent. Part of the replication restart primosome which assembles in this order; PriA, DnaD then DnaB. The preferred DNA substrate mimics an arrested DNA replication fork with unreplicated lagging strand. Interacts with DnaA, DnaB and PriA. Interaction with DnaB requires DnaD to dimerize.

It is found in the cytoplasm. Recruitment to oriC requires DnaA but not DnaB, DnaC or DnaI and is blocked by SirA. Functionally, required to load replicative helicase DnaC onto replication forks. Binds to a DnaD recognition element (DRE) which has pairs of 5'-TnnT-3' motifs; there is a strong DRE at oriC opposite the DnaA-trios recognized by DnaA. During DNA replication from the origin of replication (oriC) in the DNA replisome, DnaD is required after DnaA, before DnaB and subsequent helicase DnaC loading. A component of the replication restart primosome, which reloads the replicative helicase on sites other than oriC. DnaB, DnaD and DnaI may also be required for a PriA-independent pathway of replication fork restart. DnaB and DnaD work together to allow DnaB access to single-stranded (ss)DNA. Has DNA remodeling activity that converts supercoiled plasmid into an open circular form; DnaD forms scaffolds inside the plasmid DNA. Plasmid relaxation incorporates both wrapping around the DnaD protein scaffold and simultaneous untwisting, no nicking of the DNA is seen. Also converts linear DNA into an open circular form. Disrupts a replicative helicase-DnaI complex. Inhibits the ability of DnaA-ATP to form a helix on DNA; does not disassemble preformed helices in vitro. Binds ssDNA, and replication fork-like substrates, supercoiled plasmid, but not stably to short double-stranded (ds)DNA. DnaD stimulates DnaB DNA-binding activities. DnaB and DnaD are required to load helicase on the repN plasmid origin of replication (oriN). Causes a severe growth defect upon overexpression even in an oriC-independent strain. The sequence is that of Replicative helicase loading/DNA remodeling protein DnaD from Bacillus subtilis (strain 168).